The chain runs to 484 residues: tRNA-2-methylthio-N(6)-dimethylallyladenosine synthase (484 aa).

An MTTase N-terminal domain is found at 36-153; it reads GKLYIKTHGC…LPELIRARRE (118 aa). 6 residues coordinate [4Fe-4S] cluster: Cys45, Cys82, Cys116, Cys190, Cys194, and Cys197. The Radical SAM core domain maps to 176 to 415; that stretch reads RAEGPSAFVS…HISAHAASIS (240 aa). One can recognise a TRAM domain in the interval 416–479; it reads QSMVGSVQRV…SNSLRGRIQL (64 aa). Positions 428-450 are disordered; that stretch reads EGPSRRDPNELTGKSENMRPVNF.

This sequence belongs to the methylthiotransferase family. MiaB subfamily. In terms of assembly, monomer. [4Fe-4S] cluster serves as cofactor.

It localises to the cytoplasm. The catalysed reaction is N(6)-dimethylallyladenosine(37) in tRNA + (sulfur carrier)-SH + AH2 + 2 S-adenosyl-L-methionine = 2-methylsulfanyl-N(6)-dimethylallyladenosine(37) in tRNA + (sulfur carrier)-H + 5'-deoxyadenosine + L-methionine + A + S-adenosyl-L-homocysteine + 2 H(+). Its function is as follows. Catalyzes the methylthiolation of N6-(dimethylallyl)adenosine (i(6)A), leading to the formation of 2-methylthio-N6-(dimethylallyl)adenosine (ms(2)i(6)A) at position 37 in tRNAs that read codons beginning with uridine. In Xanthomonas oryzae pv. oryzae (strain KACC10331 / KXO85), this protein is tRNA-2-methylthio-N(6)-dimethylallyladenosine synthase.